The sequence spans 317 residues: E3 ubiquitin-protein ligase NRDP1 (317 aa).

The segment at 18-57 (CPICSGVLEEPVQAPHCEHAFCNACITQWFSQQQTCPVDR) adopts an RING-type; degenerate zinc-finger fold. The SIAH-type; degenerate zinc-finger motif lies at 78–138 (KLQIACDNAV…LPNHNCIKHL (61 aa)).

As to quaternary structure, interacts with USP8, ERBB3, PRKN and BIRC6. Interacts with CSF2RB, EPOR, IL3RA, MYD88 and TBK1. Interacts with CLEC16A. In terms of processing, autoubiquitinated. Autoubiquitination leads to proteasomal degradation. Deubiquitinated by USP8 to get stabilized which induces apoptosis. As to expression, detected in ovary, testis and prostate.

The catalysed reaction is S-ubiquitinyl-[E2 ubiquitin-conjugating enzyme]-L-cysteine + [acceptor protein]-L-lysine = [E2 ubiquitin-conjugating enzyme]-L-cysteine + N(6)-ubiquitinyl-[acceptor protein]-L-lysine.. It functions in the pathway protein modification; protein ubiquitination. In terms of biological role, acts as E3 ubiquitin-protein ligase and regulates the degradation of target proteins. Polyubiquitinates MYD88. Negatively regulates MYD88-dependent production of pro-inflammatory cytokines. Can promote TRIF-dependent production of type I interferon and inhibits infection with vesicular stomatitis virus. Promotes also activation of TBK1 and IRF3. Involved in the ubiquitination of erythropoietin (EPO) and interleukin-3 (IL-3) receptors. Thus, through maintaining basal levels of cytokine receptors, RNF41 is involved in the control of hematopoietic progenitor cell differentiation into myeloerythroid lineages. Contributes to the maintenance of steady-state ERBB3 levels by mediating its growth factor-independent degradation. Involved in the degradation of the inhibitor of apoptosis BIRC6 and thus is an important regulator of cell death by promoting apoptosis. Also acts as a PRKN modifier that accelerates its degradation, resulting in a reduction of PRKN activity, influencing the balance of intracellular redox state. The RNF41-PRKN pathway regulates autophagosome-lysosome fusion during late mitophagy. Mitophagy is a selective form of autophagy necessary for mitochondrial quality control. This Homo sapiens (Human) protein is E3 ubiquitin-protein ligase NRDP1 (RNF41).